We begin with the raw amino-acid sequence, 293 residues long: Nucleotide-binding protein BcerKBAB4_4948 (293 aa).

An ATP-binding site is contributed by 14–21 (GMSGAGKT). 65-68 (DLRG) serves as a coordination point for GTP.

It belongs to the RapZ-like family.

Functionally, displays ATPase and GTPase activities. The chain is Nucleotide-binding protein BcerKBAB4_4948 from Bacillus mycoides (strain KBAB4) (Bacillus weihenstephanensis).